Consider the following 728-residue polypeptide: MDKAQHTQGKCPVAHGGNTTVASDVMEWWPNALNLDILHQHDNKTNPMDPNFDYREAFKSLDLSAVKQDLRALMTDSKDWWPADWGHYGGLMIRMAWHSAGTYRMADGRGGAGTGNQRFAPLNSWPDNANLDKARRLLWPIKKKYGNKLSWADLIILAGTIAYESMGLKTFGFAGGRADIWHPEKDIYWGSEKQWLAASDAENSRYSGQRDLENPLAAVMMGLIYVNPEGVDGQPDPLKTAQDIRVTFERMAMNDEETVALTAGGHTVGKCHGNGRAENLEAAPEGAELEDQGLGWLNKTSRGIGRDTVTSGIEGAWTTHPTQWDNGYFELLLNYDWELKKSPAGAWQWQPINIKEEHKPVDVEDPSIRLSPIMTDADMAMKMDPEYRKISDRFYQDPAYFSEVFARAWFKLTHRDLGPKSRYLGTDVPAEELIWQDPIPQVDYSLTEQEVTDIKAKILASGLSIAQLVATAWDSARTFRGSDFRGGANGARIRLAPQKDWQGNEPARLQKVLAVLATIQAGLTKSVSIADLIVLGGTAAVEKAAHAAGVHVKVPFAAGRGDSTLAQTDVESFDVLEPLHDAFRNWQKKDYVVQPEEMMLDRTQLMGLTAHEMTVLVGGMRVLGANYDNSKHGVFTDNVGVLSNDFFVNLTDMSYNWKPAGKNLYHIVDRSTDKVKWTATRVDLVFGSNSILRSYAEIYAQDDAKEKFVNDFVKTWTKVMNADRFDLM.

The N-terminal stretch at 1–16 is a signal peptide; the sequence is MDKAQHTQGKCPVAHG. Positions 97–225 form a cross-link, tryptophyl-tyrosyl-methioninium (Trp-Tyr) (with M-251); that stretch reads WHSAGTYRMA…LAAVMMGLIY (129 aa). The active-site Proton acceptor is His-98. Residues 225–251 constitute a cross-link (tryptophyl-tyrosyl-methioninium (Tyr-Met) (with W-97)); that stretch reads YVNPEGVDGQPDPLKTAQDIRVTFERM. His-266 provides a ligand contact to heme b.

It belongs to the peroxidase family. Peroxidase/catalase subfamily. As to quaternary structure, homodimer or homotetramer. It depends on heme b as a cofactor. Post-translationally, formation of the three residue Trp-Tyr-Met cross-link is important for the catalase, but not the peroxidase activity of the enzyme.

It carries out the reaction H2O2 + AH2 = A + 2 H2O. The catalysed reaction is 2 H2O2 = O2 + 2 H2O. Its function is as follows. Bifunctional enzyme with both catalase and broad-spectrum peroxidase activity. This chain is Catalase-peroxidase 1, found in Shewanella frigidimarina (strain NCIMB 400).